The following is a 301-amino-acid chain: Sulfate adenylyltransferase subunit 2 (301 aa).

It belongs to the PAPS reductase family. CysD subfamily. Heterodimer composed of CysD, the smaller subunit, and CysN.

It catalyses the reaction sulfate + ATP + H(+) = adenosine 5'-phosphosulfate + diphosphate. It participates in sulfur metabolism; hydrogen sulfide biosynthesis; sulfite from sulfate: step 1/3. Its function is as follows. With CysN forms the ATP sulfurylase (ATPS) that catalyzes the adenylation of sulfate producing adenosine 5'-phosphosulfate (APS) and diphosphate, the first enzymatic step in sulfur assimilation pathway. APS synthesis involves the formation of a high-energy phosphoric-sulfuric acid anhydride bond driven by GTP hydrolysis by CysN coupled to ATP hydrolysis by CysD. The protein is Sulfate adenylyltransferase subunit 2 of Geotalea daltonii (strain DSM 22248 / JCM 15807 / FRC-32) (Geobacter daltonii).